The chain runs to 301 residues: PWI domain-containing protein C825.05c (301 aa).

Residues 26–137 form the PWI domain; sequence STKFPASYDT…YGIPEKFILE (112 aa). Residue serine 86 is modified to Phosphoserine. Composition is skewed to basic and acidic residues over residues 145 to 182, 189 to 205, and 215 to 229; these read LKDRTEASKEESKTVTDHSNRRESRRESTYYDSRERNG, TLDRKRFHDASDTERNR, and RFSEKPRGERYDIRS. The disordered stretch occupies residues 145–301; it reads LKDRTEASKE…ESDSGTQKHD (157 aa). A Phosphoserine modification is found at serine 199. Residues 244 to 253 are compositionally biased toward basic residues; that stretch reads PTRRRERHYR. Residues 254-289 are compositionally biased toward basic and acidic residues; it reads TRDDEGFDEFGRSRDGRWRESRTSYREKHRYDRDAL. The segment covering 290 to 301 has biased composition (polar residues); the sequence is SSESDSGTQKHD. Phosphoserine is present on serine 291.

Its subcellular location is the nucleus. This is PWI domain-containing protein C825.05c from Schizosaccharomyces pombe (strain 972 / ATCC 24843) (Fission yeast).